The primary structure comprises 133 residues: Profilin (133 aa).

Belongs to the profilin family. In terms of assembly, occurs in many kinds of cells as a complex with monomeric actin in a 1:1 ratio.

The protein localises to the cytoplasm. It is found in the cytoskeleton. In terms of biological role, binds to actin and affects the structure of the cytoskeleton. At high concentrations, profilin prevents the polymerization of actin, whereas it enhances it at low concentrations. By binding to PIP2, it inhibits the formation of IP3 and DG. In Mercurialis annua (Annual mercury), this protein is Profilin.